Consider the following 749-residue polypeptide: Chaperone protein dnaK3 (749 aa).

T198 is subject to Phosphothreonine; by autocatalysis. Basic and acidic residues-rich tracts occupy residues 643-653 (RWDADPWDRSR), 661-694 (YDDR…RDRN), and 711-724 (PTWE…RDRS). Positions 643–749 (RWDADPWDRS…GWDDDDDEWF (107 aa)) are disordered. Acidic residues predominate over residues 740–749 (GWDDDDDEWF).

This sequence belongs to the heat shock protein 70 family.

Acts as a chaperone. This chain is Chaperone protein dnaK3 (dnaK3), found in Synechococcus elongatus (strain ATCC 33912 / PCC 7942 / FACHB-805) (Anacystis nidulans R2).